The chain runs to 348 residues: Lipopolysaccharide heptosyltransferase 2 (348 aa).

Belongs to the glycosyltransferase 9 family.

It catalyses the reaction an L-alpha-D-Hep-(1-&gt;5)-[alpha-Kdo-(2-&gt;4)]-alpha-Kdo-(2-&gt;6)-lipid A + ADP-L-glycero-beta-D-manno-heptose = an L-alpha-D-Hep-(1-&gt;3)-L-alpha-D-Hep-(1-&gt;5)-[alpha-Kdo-(2-&gt;4)]-alpha-Kdo-(2-&gt;6)-lipid A + ADP + H(+). The enzyme catalyses L-alpha-D-Hep-(1-&gt;5)-[alpha-Kdo-(2-&gt;4)]-alpha-Kdo-(2-&gt;6)-lipid A (E. coli) + ADP-L-glycero-beta-D-manno-heptose = L-alpha-D-Hep-(1-&gt;3)-L-alpha-D-Hep-(1-&gt;5)-[alpha-Kdo-(2-&gt;4)]-alpha-Kdo-(2-&gt;6)-lipid A (E. coli) + ADP + H(+). It functions in the pathway bacterial outer membrane biogenesis; LPS core biosynthesis. Its function is as follows. Glycosyltransferase involved in the biosynthesis of the core oligosaccharide region of lipopolysaccharide (LPS). Catalyzes the addition of the second heptose unit to the heptosyl-Kdo2-lipid A module. The analog ADP-mannose can serve as an alternative donor in place of ADP-L-glycero-D-manno-heptose, but with lower efficiency. This chain is Lipopolysaccharide heptosyltransferase 2, found in Escherichia coli (strain K12).